The chain runs to 363 residues: Peptide chain release factor 1 (363 aa).

Q237 is subject to N5-methylglutamine.

Belongs to the prokaryotic/mitochondrial release factor family. In terms of processing, methylated by PrmC. Methylation increases the termination efficiency of RF1.

It is found in the cytoplasm. Functionally, peptide chain release factor 1 directs the termination of translation in response to the peptide chain termination codons UAG and UAA. The polypeptide is Peptide chain release factor 1 (Mesoplasma florum (strain ATCC 33453 / NBRC 100688 / NCTC 11704 / L1) (Acholeplasma florum)).